The primary structure comprises 511 residues: Acetylcholine receptor subunit alpha-type unc-38 (511 aa).

The signal sequence occupies residues 1–16 (MRSFWLFLLLLLFCIS). The Extracellular portion of the chain corresponds to 17–261 (FIKLTEGNED…QLRRKPLFYT (245 aa)). Asn124 is a glycosylation site (N-linked (GlcNAc...) asparagine). Cys151 and Cys165 are joined by a disulfide. N-linked (GlcNAc...) asparagine glycosylation is present at Asn202. A disulfide bridge connects residues Cys238 and Cys239. 3 helical membrane passes run 262 to 282 (VNLV…FYLP), 291 to 311 (LCIS…EIIP), and 324 to 344 (LLFT…SLNL). The Cytoplasmic portion of the chain corresponds to 345–464 (HFRTPTTHLM…WKYVAMVLDR (120 aa)). A helical membrane pass occupies residues 465–485 (LFLLIFSIACFVGTVIILLRA).

Belongs to the ligand-gated ion channel (TC 1.A.9) family. Acetylcholine receptor (TC 1.A.9.1) subfamily. Component of nicotinic acetylcholine receptor. In muscles, composed of 2 non-alpha subunits lev-1 and unc-29, and 3 alpha subunits unc-38, unc-63 and lev-8. In cholinergic motoneurons, composed of 2 non-alpha subunits acr-2 and acr-3, and 3 alpha subunits unc-38, unc-63 and acr-12.

The protein localises to the postsynaptic cell membrane. It is found in the cell membrane. Functionally, alpha subunit of nicotinic acetylcholine receptor (nAChR). Probably acts in cholinergic motoneurons to regulate presynaptic neurotransmitter release, thereby ensuring normal level of excitation of cholinergic motoneurons during locomotion. Involved in nAChR sensitivity to nicotine. The sequence is that of Acetylcholine receptor subunit alpha-type unc-38 (unc-38) from Caenorhabditis elegans.